The sequence spans 205 residues: Ribonuclease HII (205 aa).

The region spanning 1–205 is the RNase H type-2 domain; it reads MLVCGVDEAG…RPARLIEAGG (205 aa). A divalent metal cation-binding residues include Asp7, Glu8, and Asp105.

It belongs to the RNase HII family. Mn(2+) serves as cofactor. Requires Mg(2+) as cofactor.

The protein resides in the cytoplasm. The catalysed reaction is Endonucleolytic cleavage to 5'-phosphomonoester.. Endonuclease that specifically degrades the RNA of RNA-DNA hybrids. The polypeptide is Ribonuclease HII (Cenarchaeum symbiosum (strain A)).